A 287-amino-acid chain; its full sequence is BURP domain-containing protein 2 (287 aa).

The N-terminal stretch at 1–21 is a signal peptide; the sequence is MARSLAALLLLLVAAAGASHA. Residues 67-287 enclose the BURP domain; that stretch reads FFLEKDLFPG…PQDDMLWVRN (221 aa).

As to expression, expressed in shoot.

This Oryza sativa subsp. japonica (Rice) protein is BURP domain-containing protein 2 (BURP2).